Here is a 101-residue protein sequence, read N- to C-terminus: MTVRILAVCGNGQGSSMIMKMKVDQFLTQSNIDHTVNSCAVGEYKSELSGADIIIASTHIAGEITVTGNKYVVGVRNMLSPADFGPKLLEVIKEHFPQDVK.

The PTS EIIB type-2 domain maps to 1-100 (MTVRILAVCG…VIKEHFPQDV (100 aa)). The Phosphocysteine intermediate role is filled by Cys-9. Residue Cys-9 is modified to Phosphocysteine.

The protein localises to the cytoplasm. The catalysed reaction is N(pros)-phospho-L-histidyl-[protein] + L-ascorbate(out) = L-ascorbate 6-phosphate(in) + L-histidyl-[protein]. Its function is as follows. The phosphoenolpyruvate-dependent sugar phosphotransferase system (sugar PTS), a major carbohydrate active transport system, catalyzes the phosphorylation of incoming sugar substrates concomitantly with their translocation across the cell membrane. The enzyme II UlaABC PTS system is involved in ascorbate transport. The chain is Ascorbate-specific PTS system EIIB component (ulaB) from Escherichia coli O157:H7.